The sequence spans 103 residues: Putative membrane protein insertion efficiency factor (103 aa).

This sequence belongs to the UPF0161 family.

The protein resides in the cell membrane. In terms of biological role, could be involved in insertion of integral membrane proteins into the membrane. This Clavibacter michiganensis subsp. michiganensis (strain NCPPB 382) protein is Putative membrane protein insertion efficiency factor.